Reading from the N-terminus, the 190-residue chain is dTTP/UTP pyrophosphatase (190 aa).

The active-site Proton acceptor is Asp71.

Belongs to the Maf family. YhdE subfamily. The cofactor is a divalent metal cation.

The protein localises to the cytoplasm. It carries out the reaction dTTP + H2O = dTMP + diphosphate + H(+). It catalyses the reaction UTP + H2O = UMP + diphosphate + H(+). In terms of biological role, nucleoside triphosphate pyrophosphatase that hydrolyzes dTTP and UTP. May have a dual role in cell division arrest and in preventing the incorporation of modified nucleotides into cellular nucleic acids. This chain is dTTP/UTP pyrophosphatase, found in Xanthomonas euvesicatoria pv. vesicatoria (strain 85-10) (Xanthomonas campestris pv. vesicatoria).